The chain runs to 564 residues: ATP-dependent RNA helicase ROK1 (564 aa).

2 disordered regions span residues 1–45 (MDIF…ESQI) and 62–87 (EDDR…DGLI). Basic and acidic residues-rich tracts occupy residues 13-23 (VKKESGPKAKA), 33-45 (DENH…ESQI), and 62-86 (EDDR…DDGL). Positions 122-150 (DLISRFSFDKRLLNNLIENGFTEPTPIQC) match the Q motif motif. The Helicase ATP-binding domain maps to 153–333 (IPVALNNRDV…QSIMMDPVRV (181 aa)). ATP is bound at residue 166 to 173 (GPTGSGKT). Positions 280-283 (DEAD) match the DEAD box motif. The Helicase C-terminal domain maps to 344-506 (NIEQKLIFCG…EVSEWMDKMA (163 aa)). The tract at residues 512–564 (EKESIKNGKAHKERKQITTVPKMDKAKRRRQQEMIAASKRRKNEELSKKHFSK) is disordered. Positions 553-564 (KNEELSKKHFSK) are enriched in basic and acidic residues.

It belongs to the DEAD box helicase family. DDX52/ROK1 subfamily. As to quaternary structure, interacts with the U3 snoRNA and is associated with the 90S and 40S pre-ribosomes. This association requires the presence of RRP5. Also interacts with OSH3.

It is found in the nucleus. It localises to the nucleolus. The enzyme catalyses ATP + H2O = ADP + phosphate + H(+). Its function is as follows. ATP-dependent RNA helicase involved in 40S ribosomal subunit biogenesis. Required for the processing and cleavage of 35S pre-rRNA at sites A0, A1, and A2, leading to mature 18S rRNA. May also have a gene-specific regulatory function since it affects nuclear fusion by regulating KAR4 expression and contributes with KEM1 to ISP-1 sensitivity. This Saccharomyces cerevisiae (strain ATCC 204508 / S288c) (Baker's yeast) protein is ATP-dependent RNA helicase ROK1 (ROK1).